We begin with the raw amino-acid sequence, 1102 residues long: DNA-directed RNA polymerase subunit beta (1102 aa).

The interval 1076-1102 (IDSQRRAPNRPTYESLHTEEDLEEEEV) is disordered.

This sequence belongs to the RNA polymerase beta chain family. In terms of assembly, in cyanobacteria the RNAP catalytic core is composed of 2 alpha, 1 beta, 1 beta', 1 gamma and 1 omega subunit. When a sigma factor is associated with the core the holoenzyme is formed, which can initiate transcription.

The catalysed reaction is RNA(n) + a ribonucleoside 5'-triphosphate = RNA(n+1) + diphosphate. Its function is as follows. DNA-dependent RNA polymerase catalyzes the transcription of DNA into RNA using the four ribonucleoside triphosphates as substrates. This chain is DNA-directed RNA polymerase subunit beta, found in Synechocystis sp. (strain ATCC 27184 / PCC 6803 / Kazusa).